The sequence spans 285 residues: 2-dehydro-3-deoxyphosphooctonate aldolase (285 aa).

This sequence belongs to the KdsA family.

Its subcellular location is the cytoplasm. The enzyme catalyses D-arabinose 5-phosphate + phosphoenolpyruvate + H2O = 3-deoxy-alpha-D-manno-2-octulosonate-8-phosphate + phosphate. It functions in the pathway carbohydrate biosynthesis; 3-deoxy-D-manno-octulosonate biosynthesis; 3-deoxy-D-manno-octulosonate from D-ribulose 5-phosphate: step 2/3. The protein operates within bacterial outer membrane biogenesis; lipopolysaccharide biosynthesis. This is 2-dehydro-3-deoxyphosphooctonate aldolase from Polaromonas naphthalenivorans (strain CJ2).